The following is a 116-amino-acid chain: Large ribosomal subunit protein uL18 (116 aa).

This sequence belongs to the universal ribosomal protein uL18 family. Part of the 50S ribosomal subunit; part of the 5S rRNA/L5/L18/L25 subcomplex. Contacts the 5S and 23S rRNAs.

This is one of the proteins that bind and probably mediate the attachment of the 5S RNA into the large ribosomal subunit, where it forms part of the central protuberance. In Ectopseudomonas mendocina (strain ymp) (Pseudomonas mendocina), this protein is Large ribosomal subunit protein uL18.